We begin with the raw amino-acid sequence, 169 residues long: Small ribosomal subunit protein uS5 (169 aa).

Residues 14-77 (MKEQVVDIRR…QAAKKNLLLV (64 aa)) form the S5 DRBM domain.

This sequence belongs to the universal ribosomal protein uS5 family. Part of the 30S ribosomal subunit. Contacts proteins S4 and S8.

With S4 and S12 plays an important role in translational accuracy. Functionally, located at the back of the 30S subunit body where it stabilizes the conformation of the head with respect to the body. The chain is Small ribosomal subunit protein uS5 from Alkaliphilus metalliredigens (strain QYMF).